Here is a 375-residue protein sequence, read N- to C-terminus: 4-hydroxy-3-methylbut-2-en-1-yl diphosphate synthase (flavodoxin) (375 aa).

Residues Cys-268, Cys-271, Cys-303, and Glu-310 each coordinate [4Fe-4S] cluster.

Belongs to the IspG family. [4Fe-4S] cluster serves as cofactor.

The enzyme catalyses (2E)-4-hydroxy-3-methylbut-2-enyl diphosphate + oxidized [flavodoxin] + H2O + 2 H(+) = 2-C-methyl-D-erythritol 2,4-cyclic diphosphate + reduced [flavodoxin]. Its pathway is isoprenoid biosynthesis; isopentenyl diphosphate biosynthesis via DXP pathway; isopentenyl diphosphate from 1-deoxy-D-xylulose 5-phosphate: step 5/6. Functionally, converts 2C-methyl-D-erythritol 2,4-cyclodiphosphate (ME-2,4cPP) into 1-hydroxy-2-methyl-2-(E)-butenyl 4-diphosphate. The sequence is that of 4-hydroxy-3-methylbut-2-en-1-yl diphosphate synthase (flavodoxin) from Bacillus velezensis (strain DSM 23117 / BGSC 10A6 / LMG 26770 / FZB42) (Bacillus amyloliquefaciens subsp. plantarum).